Here is an 85-residue protein sequence, read N- to C-terminus: Toxin TdNa9 (85 aa).

The N-terminal stretch at 1–21 (MLKFAIAVALLLFIGLELREA) is a signal peptide. The 63-residue stretch at 22-84 (RDGYPQSKVN…YGDPGTKPCM (63 aa)) folds into the LCN-type CS-alpha/beta domain. 4 disulfide bridges follow: C33-C83, C37-C58, C43-C63, and C47-C65.

It belongs to the long (4 C-C) scorpion toxin superfamily. Sodium channel inhibitor family. Beta subfamily. In terms of tissue distribution, expressed by the venom gland.

It is found in the secreted. Its function is as follows. Alpha toxins bind voltage-independently at site-3 of sodium channels (Nav) and inhibit the inactivation of the activated channels, thereby blocking neuronal transmission. This toxin binds, in vitro, to sodium channels and inhibits the inactivation of the activated channels. Seems not toxic to mice, crickets and sweet-water shrimps. In Tityus discrepans (Venezuelan scorpion), this protein is Toxin TdNa9.